A 261-amino-acid chain; its full sequence is Hemin import ATP-binding protein HmuV (261 aa).

The ABC transporter domain maps to 2-243 (LCANNVSAQI…ALLKRVYNIN (242 aa)). Position 34–41 (34–41 (GPNGAGKS)) interacts with ATP.

The protein belongs to the ABC transporter superfamily. Heme (hemin) importer (TC 3.A.1.14.5) family. As to quaternary structure, the complex is composed of two ATP-binding proteins (HmuV), two transmembrane proteins (HmuU) and a solute-binding protein (HmuT).

The protein localises to the cell inner membrane. Its function is as follows. Part of the ABC transporter complex HmuTUV involved in hemin import. Responsible for energy coupling to the transport system. The chain is Hemin import ATP-binding protein HmuV from Pseudoalteromonas translucida (strain TAC 125).